A 317-amino-acid chain; its full sequence is Melanocyte-stimulating hormone receptor (317 aa).

Over 1-37 (MPMQGAQRRLLGSLNSTPTATPNLGLAANHTGAPCLE) the chain is Extracellular. N-linked (GlcNAc...) asparagine glycosylation is present at N29. A helical transmembrane segment spans residues 38–63 (VSIPDGLFLSLGLVSLVENVLVVAAI). Residues 64–72 (AKNRNLHSP) lie on the Cytoplasmic side of the membrane. Residues 73-93 (MYCFICCLALSDLLVSGSNML) traverse the membrane as a helical segment. The Extracellular segment spans residues 94 to 118 (EMAVILLLEAGALATRASVVQQLQN). A helical membrane pass occupies residues 119–140 (TIDVLTCSSMLCSLCFLGAIAV). Residues 141-163 (DRYVSIFYALRYHSIVTLPRARR) lie on the Cytoplasmic side of the membrane. The helical transmembrane segment at 164–183 (AIAAIWVASVLSSTLFIAYC) threads the bilayer. The Extracellular portion of the chain corresponds to 184–191 (DHAAVLLC). Residues 192 to 211 (LVVFFLAMLVLMAVLYVHML) traverse the membrane as a helical segment. Topologically, residues 212–240 (ARACQHAQGITRLHKRQLPAHQGFGLRGA) are cytoplasmic. A helical membrane pass occupies residues 241-266 (ATLTILLGIFFLCWGPFFLHLMLVVL). At 267–279 (CPQHLTCSCIFKN) the chain is on the extracellular side. Residues 280–300 (FKVFLTLIICNTIIDPLIYAF) form a helical membrane-spanning segment. At 301-317 (RSQELCRTLREVLLCSW) the chain is on the cytoplasmic side. A lipid anchor (S-palmitoyl cysteine) is attached at C315.

The protein belongs to the G-protein coupled receptor 1 family. As to quaternary structure, interacts with MGRN1, but does not undergo MGRN1-mediated ubiquitination; this interaction competes with GNAS-binding and thus inhibits agonist-induced cAMP production. Interacts with OPN3; the interaction results in a decrease in MC1R-mediated cAMP signaling and ultimately a decrease in melanin production in melanocytes.

It localises to the cell membrane. Functionally, receptor for MSH (alpha, beta and gamma) and ACTH. The activity of this receptor is mediated by G proteins which activate adenylate cyclase. Mediates melanogenesis, the production of eumelanin (black/brown) and phaeomelanin (red/yellow), via regulation of cAMP signaling in melanocytes. In Alouatta pigra (Guatemalan howler monkey), this protein is Melanocyte-stimulating hormone receptor (MC1R).